A 377-amino-acid chain; its full sequence is MTIPMMGNTTDDNNNMTISAIGFEGFEKRLEISFFEPGIFVDPEGKGLRALSKAHLDEILGPAECTIVDSLANESVDSYVLSESSLFVYSYKIIIKTCGTTKLLNSIPPILRLAETLFLDVKSVRYTRGSFIFPGAQSFPHRSFSEEVAVLDNYFAKLGAGSKAIVMGSPGKPQKWHVYSATAETNYDDPVYTLEMCMTGLDKEKASVFFKSQSASAAVMTESSGIRKILPDSVICDFDFEPCGYSMNAIEGPAVSTIHITPEDGFSYASFEAVGYDLQVVDLNLLVERVLACFEPKEFSIAVHADTDTADKVLARNCSVNVIGYSREEGGIEELGLGGSVFYQKFCKGTAPVCPPAPKKTLKCCWKEEEIDEEMEF.

Residues glutamate 24 and glutamate 27 contribute to the active site. Serine 84 acts as the Schiff-base intermediate with substrate; via pyruvic acid in catalysis. Serine 84 is subject to Pyruvic acid (Ser); by autocatalysis. The Proton donor; for catalytic activity role is filled by cysteine 98. Catalysis depends on proton acceptor; for processing activity residues serine 246 and histidine 259.

The protein belongs to the eukaryotic AdoMetDC family. It depends on pyruvate as a cofactor. Is synthesized initially as an inactive proenzyme. Formation of the active enzyme involves a self-maturation process in which the active site pyruvoyl group is generated from an internal serine residue via an autocatalytic post-translational modification. Two non-identical subunits are generated from the proenzyme in this reaction, and the pyruvate is formed at the N-terminus of the alpha chain, which is derived from the carboxyl end of the proenzyme. The post-translation cleavage follows an unusual pathway, termed non-hydrolytic serinolysis, in which the side chain hydroxyl group of the serine supplies its oxygen atom to form the C-terminus of the beta chain, while the remainder of the serine residue undergoes an oxidative deamination to produce ammonia and the pyruvoyl group blocking the N-terminus of the alpha chain.

It catalyses the reaction S-adenosyl-L-methionine + H(+) = S-adenosyl 3-(methylsulfanyl)propylamine + CO2. The protein operates within amine and polyamine biosynthesis; S-adenosylmethioninamine biosynthesis; S-adenosylmethioninamine from S-adenosyl-L-methionine: step 1/1. This is S-adenosylmethionine decarboxylase proenzyme 2 (SAMDC2) from Dianthus caryophyllus (Carnation).